The sequence spans 141 residues: Nucleoside diphosphate kinase (141 aa).

Residues K11, F59, R87, T93, R104, and N114 each coordinate ATP. The active-site Pros-phosphohistidine intermediate is H117.

This sequence belongs to the NDK family. As to quaternary structure, homotetramer. Mg(2+) serves as cofactor.

It localises to the cytoplasm. It catalyses the reaction a 2'-deoxyribonucleoside 5'-diphosphate + ATP = a 2'-deoxyribonucleoside 5'-triphosphate + ADP. The catalysed reaction is a ribonucleoside 5'-diphosphate + ATP = a ribonucleoside 5'-triphosphate + ADP. Functionally, major role in the synthesis of nucleoside triphosphates other than ATP. The ATP gamma phosphate is transferred to the NDP beta phosphate via a ping-pong mechanism, using a phosphorylated active-site intermediate. The protein is Nucleoside diphosphate kinase of Albidiferax ferrireducens (strain ATCC BAA-621 / DSM 15236 / T118) (Rhodoferax ferrireducens).